The primary structure comprises 272 residues: Eukaryotic translation initiation factor 3 subunit G (272 aa).

Disordered stretches follow at residues 1–28 (MPALDEIKSSWADEVELDSGSLPPPTEI) and 143–187 (AGKA…RGRD). The RRM domain occupies 190–268 (TAIRISNLSE…LILNVEWSKP (79 aa)).

This sequence belongs to the eIF-3 subunit G family. In terms of assembly, component of the eukaryotic translation initiation factor 3 (eIF-3) complex.

It is found in the cytoplasm. Functionally, RNA-binding component of the eukaryotic translation initiation factor 3 (eIF-3) complex, which is involved in protein synthesis of a specialized repertoire of mRNAs and, together with other initiation factors, stimulates binding of mRNA and methionyl-tRNAi to the 40S ribosome. The eIF-3 complex specifically targets and initiates translation of a subset of mRNAs involved in cell proliferation. This subunit can bind 18S rRNA. The chain is Eukaryotic translation initiation factor 3 subunit G from Culex quinquefasciatus (Southern house mosquito).